Reading from the N-terminus, the 572-residue chain is Putative two-component response regulator ARR13 (572 aa).

One can recognise a Response regulatory domain in the interval 17 to 134 (NVMVVDDNRV…DLPKIYQFAL (118 aa)). Asp-71 carries the post-translational modification 4-aspartylphosphate. The segment at 175–225 (KKNCSSKSDTRTVNSTNVSHVSTNGSRKNRKRKPKGGPSDDGESLSQPPKK) is disordered. Polar residues predominate over residues 179-197 (SSKSDTRTVNSTNVSHVST). The Nuclear localization signal motif lies at 224–227 (KKKK). Residues 227–277 (KIWWTNPLQDLFLQAIQHIGYDKVVPKKILAIMNVPYLTRENVASHLQKYR) constitute a DNA-binding region (myb-like GARP). Over residues 509–522 (NQDQSNGESSNTIA) the composition is skewed to polar residues. Residues 509–531 (NQDQSNGESSNTIATPETNTPNF) form a disordered region.

The protein belongs to the ARR family. Type-B subfamily. In terms of assembly, binds the target DNA as a monomer. Post-translationally, two-component system major event consists of a His-to-Asp phosphorelay between a sensor histidine kinase (HK) and a response regulator (RR). In plants, the His-to-Asp phosphorelay involves an additional intermediate named Histidine-containing phosphotransfer protein (HPt). This multistep phosphorelay consists of a His-Asp-His-Asp sequential transfer of a phosphate group between first a His and an Asp of the HK protein, followed by the transfer to a conserved His of the HPt protein and finally the transfer to an Asp in the receiver domain of the RR protein.

Its subcellular location is the nucleus. Its function is as follows. Putative transcriptional activator that binds specifically to the DNA sequence 5'-[AG]GATT-3'. Functions as a response regulator involved in His-to-Asp phosphorelay signal transduction system. Phosphorylation of the Asp residue in the receiver domain activates the ability of the protein to promote the transcription of target genes. Could directly activate some type-A response regulators in response to cytokinins. In Arabidopsis thaliana (Mouse-ear cress), this protein is Putative two-component response regulator ARR13 (ARR13).